The primary structure comprises 315 residues: Phosphomutase-like protein 3 (315 aa).

Positions 1-19 (MQQFLTLGALWTLFNVATT) are cleaved as a signal peptide. His-77 functions as the Tele-phosphohistidine intermediate in the catalytic mechanism. Residues Asn-88 and Asn-154 are each glycosylated (N-linked (GlcNAc...) asparagine). Glu-173 (proton donor/acceptor) is an active-site residue. Asn-185 carries N-linked (GlcNAc...) asparagine glycosylation. Asn-286 carries GPI-anchor amidated asparagine lipidation. A propeptide spans 287–315 (DAWDTFKDWCPNPPASISGTATSTATGSA) (removed in mature form).

This sequence belongs to the phosphoglycerate mutase family.

It is found in the cell membrane. The protein is Phosphomutase-like protein 3 (PGA12) of Candida albicans (strain SC5314 / ATCC MYA-2876) (Yeast).